Consider the following 566-residue polypeptide: Good for full DBP5 activity protein 2 (566 aa).

Polar residues predominate over residues 1–16 (MQVQKMVRDNSNNGSD). Residues 1–41 (MQVQKMVRDNSNNGSDKSVHWERRNNNGAGPRYRSRSGNTG) form a disordered region.

High-copy suppressor of DBP5 mutation. The chain is Good for full DBP5 activity protein 2 (GFD2) from Saccharomyces cerevisiae (strain ATCC 204508 / S288c) (Baker's yeast).